The chain runs to 181 residues: Calmodulin-like protein 6 (181 aa).

EF-hand domains are found at residues 33 to 68 (EQIK…LGIN), 69 to 104 (PTKS…YHEK), 107 to 142 (NQES…AGEP), and 143 to 178 (LNEV…ESFK). Ca(2+) is bound by residues D156, D158, D160, T162, and E167.

This sequence belongs to the calmodulin family. Calglandulin subfamily. As to expression, expressed in prostate, thymus, heart, skeleton muscle, bone marrow and ovary.

The protein localises to the cytoplasm. Its subcellular location is the nucleus. The sequence is that of Calmodulin-like protein 6 (CALML6) from Homo sapiens (Human).